Consider the following 265-residue polypeptide: Hydroxyethylthiazole kinase (265 aa).

Methionine 50 contributes to the substrate binding site. Residues arginine 125 and threonine 171 each coordinate ATP. Glycine 198 lines the substrate pocket.

The protein belongs to the Thz kinase family. The cofactor is Mg(2+).

The enzyme catalyses 5-(2-hydroxyethyl)-4-methylthiazole + ATP = 4-methyl-5-(2-phosphooxyethyl)-thiazole + ADP + H(+). It participates in cofactor biosynthesis; thiamine diphosphate biosynthesis; 4-methyl-5-(2-phosphoethyl)-thiazole from 5-(2-hydroxyethyl)-4-methylthiazole: step 1/1. Its function is as follows. Catalyzes the phosphorylation of the hydroxyl group of 4-methyl-5-beta-hydroxyethylthiazole (THZ). This Salmonella arizonae (strain ATCC BAA-731 / CDC346-86 / RSK2980) protein is Hydroxyethylthiazole kinase.